The chain runs to 446 residues: tRNA-2-methylthio-N(6)-dimethylallyladenosine synthase (446 aa).

One can recognise an MTTase N-terminal domain in the interval 5 to 121; the sequence is RRFYIQTFGC…LPSLIDDAAS (117 aa). Positions 14, 50, 84, 157, 161, and 164 each coordinate [4Fe-4S] cluster. The Radical SAM core domain maps to 143–373; sequence REGRISAFIP…IDLQQEISAE (231 aa). The region spanning 376 to 439 is the TRAM domain; sequence RRQVGTVAEV…SATLSGSREG (64 aa).

The protein belongs to the methylthiotransferase family. MiaB subfamily. As to quaternary structure, monomer. It depends on [4Fe-4S] cluster as a cofactor.

The protein resides in the cytoplasm. The catalysed reaction is N(6)-dimethylallyladenosine(37) in tRNA + (sulfur carrier)-SH + AH2 + 2 S-adenosyl-L-methionine = 2-methylsulfanyl-N(6)-dimethylallyladenosine(37) in tRNA + (sulfur carrier)-H + 5'-deoxyadenosine + L-methionine + A + S-adenosyl-L-homocysteine + 2 H(+). Functionally, catalyzes the methylthiolation of N6-(dimethylallyl)adenosine (i(6)A), leading to the formation of 2-methylthio-N6-(dimethylallyl)adenosine (ms(2)i(6)A) at position 37 in tRNAs that read codons beginning with uridine. The protein is tRNA-2-methylthio-N(6)-dimethylallyladenosine synthase of Chlorobium luteolum (strain DSM 273 / BCRC 81028 / 2530) (Pelodictyon luteolum).